A 255-amino-acid chain; its full sequence is Thiazole synthase (255 aa).

The active-site Schiff-base intermediate with DXP is the lysine 97. Residues glycine 158, alanine 184–glycine 185, and asparagine 206–threonine 207 contribute to the 1-deoxy-D-xylulose 5-phosphate site.

Belongs to the ThiG family. Homotetramer. Forms heterodimers with either ThiH or ThiS.

The protein localises to the cytoplasm. It carries out the reaction [ThiS sulfur-carrier protein]-C-terminal-Gly-aminoethanethioate + 2-iminoacetate + 1-deoxy-D-xylulose 5-phosphate = [ThiS sulfur-carrier protein]-C-terminal Gly-Gly + 2-[(2R,5Z)-2-carboxy-4-methylthiazol-5(2H)-ylidene]ethyl phosphate + 2 H2O + H(+). It functions in the pathway cofactor biosynthesis; thiamine diphosphate biosynthesis. Functionally, catalyzes the rearrangement of 1-deoxy-D-xylulose 5-phosphate (DXP) to produce the thiazole phosphate moiety of thiamine. Sulfur is provided by the thiocarboxylate moiety of the carrier protein ThiS. In vitro, sulfur can be provided by H(2)S. The polypeptide is Thiazole synthase (Acetivibrio thermocellus (strain ATCC 27405 / DSM 1237 / JCM 9322 / NBRC 103400 / NCIMB 10682 / NRRL B-4536 / VPI 7372) (Clostridium thermocellum)).